A 1035-amino-acid polypeptide reads, in one-letter code: Teashirt homolog 2 (1035 aa).

The segment at 1 to 92 is disordered; sequence MPRRKQQAPK…ESLLSDASDQ (92 aa). Residues 13–42 are a coiled coil; the sequence is AGYAQEEQLKEEEEIKEEEEEEEDSGSVAQ. Acidic residues predominate over residues 21–37; it reads LKEEEEIKEEEEEEEDS. 2 stretches are compositionally biased toward polar residues: residues 39-49 and 66-92; these read SVAQLQGSNDP and SYQNSPGSHLSNQDAENESLLSDASDQ. K189 is covalently cross-linked (Glycyl lysine isopeptide (Lys-Gly) (interchain with G-Cter in SUMO2)). C2H2-type zinc fingers lie at residues 216-240 and 276-300; these read FRCRQCSAAYDTLVELTVHMNETGH and LKCMFCGDSFDSLQDLSVHMIKTKH. A disordered region spans residues 240 to 266; it reads HYQDDNRKKDKLRPTSYSKPRKRAFQD. Glycyl lysine isopeptide (Lys-Gly) (interchain with G-Cter in SUMO2) cross-links involve residues K307 and K316. The segment at 381–405 adopts a C2H2-type 3; atypical zinc-finger fold; sequence LKCMECGSSHDTLQQLTTHMMVTGH. Residue K418 forms a Glycyl lysine isopeptide (Lys-Gly) (interchain with G-Cter in SUMO2) linkage. Residues 432-450 show a composition bias toward low complexity; sequence SLSDAPSSDSLAPKPSSNS. Positions 432 to 496 are disordered; that stretch reads SLSDAPSSDS…DPLQKPLDPA (65 aa). Basic and acidic residues predominate over residues 460–483; it reads ELKRESKKEKPEELRTDEKVLKSE. Glycyl lysine isopeptide (Lys-Gly) (interchain with G-Cter in SUMO2) cross-links involve residues K462, K481, K498, and K602. Disordered regions lie at residues 600–674 and 764–791; these read QVKK…VEPV and QPIDLTKSKSKKAESSQAQSCTSPPQKH. The segment covering 601 to 669 has biased composition (basic and acidic residues); that stretch reads VKKEPEDKEE…KDGGEKEKAQ (69 aa). Residues K801 and K821 each participate in a glycyl lysine isopeptide (Lys-Gly) (interchain with G-Cter in SUMO2) cross-link. Positions 842-912 form a DNA-binding region, homeobox; the sequence is RKGRQSNWNP…NVKYQLRKTG (71 aa). The C2H2-type 4 zinc-finger motif lies at 927 to 949; the sequence is FYCSDCASQFRTPSTYISHLESH. Positions 968 to 977 are enriched in low complexity; it reads VEQEISRVSS. 2 disordered regions span residues 968 to 987 and 1015 to 1035; these read VEQEISRVSSAQRSPETIAG and SKTHSKSPEHHAQFVTDVDEE. The residue at position 981 (S981) is a Phosphoserine. The C2H2-type 5 zinc-finger motif lies at 995-1018; the sequence is FKCKLCCRTFVSKHAVKLHLSKTH.

It belongs to the teashirt C2H2-type zinc-finger protein family. Interacts (via homeobox domain) with APBB1 (via PID domain 1). In terms of processing, sumoylated.

It is found in the nucleus. In terms of biological role, probable transcriptional regulator involved in developmental processes. May act as a transcriptional repressor (Potential). This chain is Teashirt homolog 2 (TSHZ2), found in Sus scrofa (Pig).